The primary structure comprises 187 residues: Pyridoxal 5'-phosphate synthase subunit PdxT (187 aa).

47 to 49 (GES) provides a ligand contact to L-glutamine. Cysteine 76 serves as the catalytic Nucleophile. Residues arginine 102 and 128-129 (IR) each bind L-glutamine. Catalysis depends on charge relay system residues histidine 165 and glutamate 167.

Belongs to the glutaminase PdxT/SNO family. In the presence of PdxS, forms a dodecamer of heterodimers. Only shows activity in the heterodimer.

It catalyses the reaction aldehydo-D-ribose 5-phosphate + D-glyceraldehyde 3-phosphate + L-glutamine = pyridoxal 5'-phosphate + L-glutamate + phosphate + 3 H2O + H(+). The enzyme catalyses L-glutamine + H2O = L-glutamate + NH4(+). It functions in the pathway cofactor biosynthesis; pyridoxal 5'-phosphate biosynthesis. Catalyzes the hydrolysis of glutamine to glutamate and ammonia as part of the biosynthesis of pyridoxal 5'-phosphate. The resulting ammonia molecule is channeled to the active site of PdxS. This chain is Pyridoxal 5'-phosphate synthase subunit PdxT, found in Methanococcus maripaludis (strain DSM 14266 / JCM 13030 / NBRC 101832 / S2 / LL).